The following is a 454-amino-acid chain: Asparagine--tRNA ligase (454 aa).

Belongs to the class-II aminoacyl-tRNA synthetase family. As to quaternary structure, homodimer.

The protein localises to the cytoplasm. It carries out the reaction tRNA(Asn) + L-asparagine + ATP = L-asparaginyl-tRNA(Asn) + AMP + diphosphate + H(+). This chain is Asparagine--tRNA ligase, found in Microcystis aeruginosa (strain NIES-843 / IAM M-2473).